A 139-amino-acid polypeptide reads, in one-letter code: Large ribosomal subunit protein eL32 (139 aa).

This sequence belongs to the eukaryotic ribosomal protein eL32 family.

The protein is Large ribosomal subunit protein eL32 (RPL32) of Encephalitozoon cuniculi (strain GB-M1) (Microsporidian parasite).